The sequence spans 371 residues: Maltose/maltodextrin import ATP-binding protein MalK (371 aa).

An ABC transporter domain is found at 4–234 (VQLQNVTKAW…PADRFVAGFI (231 aa)). An ATP-binding site is contributed by 36–43 (GPSGCGKS).

Belongs to the ABC transporter superfamily. Maltooligosaccharide importer (TC 3.A.1.1.1) family. The complex is composed of two ATP-binding proteins (MalK), two transmembrane proteins (MalG and MalK) and a solute-binding protein (MalE).

The protein localises to the cell inner membrane. It catalyses the reaction D-maltose(out) + ATP + H2O = D-maltose(in) + ADP + phosphate + H(+). In terms of biological role, part of the ABC transporter complex MalEFGK involved in maltose/maltodextrin import. Responsible for energy coupling to the transport system. This chain is Maltose/maltodextrin import ATP-binding protein MalK, found in Shigella flexneri serotype 5b (strain 8401).